We begin with the raw amino-acid sequence, 330 residues long: Acrylyl-CoA reductase AcuI (330 aa).

NADP(+)-binding positions include Y44, 159–162 (AGGV), 181–183 (TGR), R201, L247, and S272.

Belongs to the zinc-containing alcohol dehydrogenase family. Acrylyl-CoA reductase subfamily. As to quaternary structure, homodimer.

The protein resides in the cytoplasm. It carries out the reaction propanoyl-CoA + NADP(+) = acryloyl-CoA + NADPH + H(+). Probably catalyzes the NADPH-dependent reduction of acrylyl-CoA to propanoyl-CoA. Restores acrylate resistance when expressed in an E.coli strain K12 acuI deletion. The protein is Acrylyl-CoA reductase AcuI (acuI) of Ruegeria pomeroyi (strain ATCC 700808 / DSM 15171 / DSS-3) (Silicibacter pomeroyi).